We begin with the raw amino-acid sequence, 1105 residues long: Ran-binding protein 6 (1105 aa).

The residue at position 2 (alanine 2) is an N-acetylalanine. 4 HEAT repeats span residues 219–257, 361–399, 402–440, and 444–483; these read FKDF…TVPK, KVVL…GCHQ, ESIL…DFAP, and KKFH…DCPK. Positions 333–383 are ran-GTP binding; sequence DEMEEDDFDSNAVAAESALDRLACGLGGKVVLPMTKEHIMQMLQSPDWKYR. Residues 806–842 are a coiled coil; it reads KAKLEGHFKNQELRQVKRQEENYDQQVEMSLQDEDEC. HEAT repeat units follow at residues 866–905, 908–946, and 949–987; these read LPWF…HCSP, FKYV…FGGD, and RSLC…IGKI.

The protein belongs to the importin beta family.

The protein resides in the cytoplasm. It localises to the nucleus. In terms of biological role, may function in nuclear protein import as nuclear transport receptor. This Homo sapiens (Human) protein is Ran-binding protein 6 (RANBP6).